The chain runs to 419 residues: Serine hydroxymethyltransferase (419 aa).

(6S)-5,6,7,8-tetrahydrofolate-binding positions include Leu121 and 125-127 (GHL). Lys230 is modified (N6-(pyridoxal phosphate)lysine).

It belongs to the SHMT family. Homodimer. Requires pyridoxal 5'-phosphate as cofactor.

The protein localises to the cytoplasm. The enzyme catalyses (6R)-5,10-methylene-5,6,7,8-tetrahydrofolate + glycine + H2O = (6S)-5,6,7,8-tetrahydrofolate + L-serine. The protein operates within one-carbon metabolism; tetrahydrofolate interconversion. It functions in the pathway amino-acid biosynthesis; glycine biosynthesis; glycine from L-serine: step 1/1. In terms of biological role, catalyzes the reversible interconversion of serine and glycine with tetrahydrofolate (THF) serving as the one-carbon carrier. This reaction serves as the major source of one-carbon groups required for the biosynthesis of purines, thymidylate, methionine, and other important biomolecules. Also exhibits THF-independent aldolase activity toward beta-hydroxyamino acids, producing glycine and aldehydes, via a retro-aldol mechanism. This chain is Serine hydroxymethyltransferase, found in Vesicomyosocius okutanii subsp. Calyptogena okutanii (strain HA).